Reading from the N-terminus, the 666-residue chain is SNARE-interacting protein KEULE (666 aa).

Residues 340-377 (KNKAAQLQGKRDGAELSTRDLQKMVQALPQYSEQIDKL) are a coiled coil. The interval 534-589 (KEDFPCMNDPSPSFHGSTSLSSAASSSQGQAAQSMRSRRTPTWAKPRGSDDGYSSD) is disordered. Positions 550–568 (STSLSSAASSSQGQAAQSM) are enriched in low complexity.

The protein belongs to the STXBP/unc-18/SEC1 family. As to quaternary structure, binds the syntaxin KNOLLE. Interacts with SEC6. In terms of tissue distribution, expressed throughout the plant, both in mitotically active and quiescent cells. Enriched in dividing tissues.

It is found in the cytoplasm. Its subcellular location is the membrane. The protein localises to the cytoskeleton. The protein resides in the phragmoplast. Regulator of vesicle trafficking involved in cytokinesis and root hair development, but not required for cell elongation. The chain is SNARE-interacting protein KEULE (KEU) from Arabidopsis thaliana (Mouse-ear cress).